The sequence spans 76 residues: ATP synthase subunit 9, mitochondrial (76 aa).

N-formylmethionine is present on M1. 2 helical membrane-spanning segments follow: residues 14-34 (LASI…AALI) and 52-72 (ILGF…AFLL).

As to quaternary structure, F-type ATP synthases have 2 components, the catalytic core F(1) and the membrane-embedded component F(0), linked together by a central stalk and a peripheral stalk. The central stalk, also called rotor shaft, is often seen as part of F(1). The peripheral stalk is seen as part of F(0). F(0) contains the membrane channel next to the rotor. F-type ATP synthases form dimers but each monomer functions independently in ATP generation. The dimer consists of 17 different polypeptides: ATP1 (subunit alpha, 3 molecules per monomer, part of F(1)), ATP2 (subunit beta, 3 copies per monomer, part of F(1)), ATP3 (subunit gamma, part of the central stalk), ATP4 (subunit b, part of the peripheral stalk), ATP5/OSCP (subunit 5/OSCP, part of the peripheral stalk), ATP6 (subunit a, part of the peripheral stalk), ATP7 (subunit d, part of the peripheral stalk), ATP8 (subunit 8, part of the peripheral stalk), OLI1 (subunit c, part of the rotor, 10 molecules per monomer), ATP14 (subunit h, part of the peripheral stalk), ATP15 (subunit epsilon, part of the central stalk), ATP16 (subunit delta, part of the central stalk), ATP17 (subunit f, part of the peripheral stalk), ATP18 (subunit i/j, part of the peripheral stalk), ATP19 (subunit k, dimer-specific, at interface between monomers), ATP20 (subunit g, at interface between monomers), TIM11 (subunit e, at interface between monomers).

The protein resides in the mitochondrion inner membrane. In terms of biological role, mitochondrial membrane ATP synthase (F(1)F(0) ATP synthase or Complex V) produces ATP from ADP in the presence of a proton gradient across the membrane which is generated by electron transport complexes of the respiratory chain. F-type ATP synthases consist of two structural domains, F(1) - containing the extramembraneous catalytic core, and F(0) - containing the membrane proton channel, linked together by a central stalk and a peripheral stalk. During catalysis, ATP synthesis in the catalytic domain of F(1) is coupled via a rotary mechanism of the central stalk subunits to proton translocation. Part of the complex F(0) domain. A homomeric c-ring of 10 OLI1/ATP9 subunits is part of the complex rotary element. This is ATP synthase subunit 9, mitochondrial from Yarrowia lipolytica (strain CLIB 122 / E 150) (Yeast).